Reading from the N-terminus, the 163-residue chain is Halocyanin (163 aa).

The N-terminal stretch at 1–24 (MKDISRRRFVLGTGATVAAATLAG) is a signal peptide. Cys-25 bears the N-acetylcysteine mark. Residue Cys-25 is the site of S-archaeol cysteine attachment. A compositionally biased stretch (gly residues) spans 26–38 (NGNGNGNGNGNGN). A disordered region spans residues 26-48 (NGNGNGNGNGNGNGEPDTPEGRA). In terms of domain architecture, Plastocyanin-like spans 48–163 (ADQFLTDNDA…QGMYGAVIVE (116 aa)). Cu cation contacts are provided by His-110, Cys-148, His-151, and Met-156.

It is found in the cell membrane. Its function is as follows. Electron donor. Binds one copper ion. This Natronomonas pharaonis (Natronobacterium pharaonis) protein is Halocyanin (hcy).